A 339-amino-acid polypeptide reads, in one-letter code: MRMEKTTDKSLSAGDMNDEYSRGPIDDIDCLNFFERAVQDPCCEACDTEDADEELRAKLSSFNFQPDSSPCNAKCQQTLNPLCKIDEALSAESELAPSRNGSVSEANSDTNSIASTVHDPVDSKYGGMPSLRKAKTTSYFASSSSNNTTMRNPLKKCNTNINGLLVNGRSSSSSRQSIPELFSGACTKKKNNVLLKSETPNSEFSSNSLQHCNSRSFSLPRSRSRSSAIAIPTHLYGLEKYVSPGLDTLTADPEESIERFSNNRPREISSCCPNDTGDTSSSLSHSNTSSSLNFPLGTNTNQFHQPRQPVQQQQSSKPNFGAGRKKSFIEMSLASSFAG.

Disordered stretches follow at residues 1 to 20 (MRMEKTTDKSLSAGDMNDEY) and 94 to 130 (ELAPSRNGSVSEANSDTNSIASTVHDPVDSKYGGMPS). Residues 99 to 115 (RNGSVSEANSDTNSIAS) show a composition bias toward polar residues. Position 159 is a phosphothreonine (Thr-159). Ser-177 carries the post-translational modification Phosphoserine. Residues 198–213 (ETPNSEFSSNSLQHCN) show a composition bias toward polar residues. The disordered stretch occupies residues 198–224 (ETPNSEFSSNSLQHCNSRSFSLPRSRS). Residues 214–224 (SRSFSLPRSRS) are compositionally biased toward low complexity. Phosphoserine is present on residues Ser-224 and Ser-227. A disordered region spans residues 258 to 325 (ERFSNNRPRE…SKPNFGAGRK (68 aa)). Low complexity-rich tracts occupy residues 279 to 293 (TSSSLSHSNTSSSLN) and 302 to 314 (QFHQPRQPVQQQQ).

The protein belongs to the ISF1/MBR1 family.

It is found in the mitochondrion. In terms of biological role, participates in mitochondrial biogenesis and stress response. This Saccharomyces cerevisiae (strain YJM789) (Baker's yeast) protein is Mitochondrial biogenesis regulation protein 1 (MBR1).